We begin with the raw amino-acid sequence, 85 residues long: Cell division topological specificity factor (85 aa).

The protein belongs to the MinE family.

Its function is as follows. Prevents the cell division inhibition by proteins MinC and MinD at internal division sites while permitting inhibition at polar sites. This ensures cell division at the proper site by restricting the formation of a division septum at the midpoint of the long axis of the cell. The sequence is that of Cell division topological specificity factor from Xylella fastidiosa (strain M12).